Reading from the N-terminus, the 643-residue chain is Beta-1,3-galactosyltransferase GALT1 (643 aa).

Over 1-6 the chain is Cytoplasmic; it reads MKRFYG. Residues 7–23 form a helical; Signal-anchor for type II membrane protein membrane-spanning segment; that stretch reads GLLVVSMCMFLTVYRYV. Topologically, residues 24-643 are lumenal; sequence DLNTPVEKPY…TKRSLCCREW (620 aa). N-linked (GlcNAc...) asparagine glycosylation is found at N45, N87, N144, N162, N277, N287, and N508. The 194-residue stretch at 171 to 364 folds into the Galectin domain; it reads LKLQIPCGLT…DFRLISILAS (194 aa).

It belongs to the glycosyltransferase 31 family. As to quaternary structure, interacts with GMII. Mn(2+) serves as cofactor. In terms of tissue distribution, expressed in stems and siliques.

The protein resides in the golgi apparatus membrane. It functions in the pathway protein modification; protein glycosylation. Beta-1,3-galactosyltransferase that transfers galactose from UDP-galactose to substrates with a terminal beta-N-acetylglucosamine (beta-GlcNAc) residue. Involved in the biosynthesis of N-glycans containing Lewis a structures (with the combination of FUT13). This chain is Beta-1,3-galactosyltransferase GALT1, found in Arabidopsis thaliana (Mouse-ear cress).